Here is a 240-residue protein sequence, read N- to C-terminus: uncharacterized protein (240 aa).

Residues 26–52 (DYVDDGESLPTRQSVKNQREQKKKQGK) are disordered. The chain crosses the membrane as a helical span at residues 57 to 77 (LFTVLAVIFVFVPVIVLVTLF). The disordered stretch occupies residues 100-185 (KYEVVPKSED…QPAEPVQNVP (86 aa)). A compositionally biased stretch (basic and acidic residues) spans 103-159 (VVPKSEDKNDTADTKETALQKESKKEPEDSKPKEQTAADKKQTAVAEKEDSPNKEEA). Residues 160-185 (TAAAASSSQSTVQQQEQPAEPVQNVP) are compositionally biased toward low complexity. Positions 189-235 (VKHTVQKKETLYRISMKYYKSRTGEEKIRAYNHLNGNDVYTGQVLDI) constitute a LysM domain.

It is found in the membrane. This is an uncharacterized protein from Bacillus subtilis (strain 168).